The primary structure comprises 280 residues: NAD(+) hydrolase TirS (280 aa).

Residues 22–94 are a coiled coil; sequence MNKLPDEIDR…KINLQKEQSR (73 aa). Residues 141–275 enclose the TIR domain; sequence IEYDVFLSHS…EIVEKIYQVI (135 aa). NAD(+) contacts are provided by residues 150 to 151 and glutamate 180; that span reads SS. The active site involves glutamate 216.

The protein resides in the secreted. The enzyme catalyses NAD(+) + H2O = ADP-D-ribose + nicotinamide + H(+). It carries out the reaction NADP(+) + H2O = ADP-D-ribose 2'-phosphate + nicotinamide + H(+). Functionally, virulence factor that suppresses host Toll-like receptor 2 (TLR2)-mediated NF-kappa-B signaling upon infection. NAD(+) hydrolase (NADase) that catalyzes cleavage of NAD(+) into ADP-D-ribose (ADPR) and nicotinamide. Also able to hydrolyze NADP(+), but not other NAD(+)-related molecules. Able to reduce NAD(+) levels in host cells. The chain is NAD(+) hydrolase TirS from Staphylococcus aureus (strain MSSA476).